The primary structure comprises 305 residues: HPr kinase/phosphorylase (305 aa).

Active-site residues include H138 and K159. Position 153–160 (153–160) interacts with ATP; that stretch reads GESGIGKS. S160 provides a ligand contact to Mg(2+). The Proton acceptor; for phosphorylation activity. Proton donor; for dephosphorylation activity role is filled by D177. The interval 201–210 is important for the catalytic mechanism of both phosphorylation and dephosphorylation; it reads IEIRGIGILD. E202 is a Mg(2+) binding site. R243 is an active-site residue. Residues 264–269 form an important for the catalytic mechanism of dephosphorylation region; that stretch reads PVRPGR.

This sequence belongs to the HPrK/P family. In terms of assembly, homohexamer. Mg(2+) is required as a cofactor.

The enzyme catalyses [HPr protein]-L-serine + ATP = [HPr protein]-O-phospho-L-serine + ADP + H(+). It carries out the reaction [HPr protein]-O-phospho-L-serine + phosphate + H(+) = [HPr protein]-L-serine + diphosphate. Catalyzes the ATP- as well as the pyrophosphate-dependent phosphorylation of a specific serine residue in HPr, a phosphocarrier protein of the phosphoenolpyruvate-dependent sugar phosphotransferase system (PTS). HprK/P also catalyzes the pyrophosphate-producing, inorganic phosphate-dependent dephosphorylation (phosphorolysis) of seryl-phosphorylated HPr (P-Ser-HPr). The two antagonistic activities of HprK/P are regulated by several intracellular metabolites, which change their concentration in response to the absence or presence of rapidly metabolisable carbon sources (glucose, fructose, etc.) in the growth medium. Therefore, by controlling the phosphorylation state of HPr, HPrK/P is a sensor enzyme that plays a major role in the regulation of carbon metabolism and sugar transport: it mediates carbon catabolite repression (CCR), and regulates PTS-catalyzed carbohydrate uptake and inducer exclusion. This chain is HPr kinase/phosphorylase, found in Caldanaerobacter subterraneus subsp. tengcongensis (strain DSM 15242 / JCM 11007 / NBRC 100824 / MB4) (Thermoanaerobacter tengcongensis).